A 77-amino-acid chain; its full sequence is MCICVNCDLLVFCSLYQTIEILHKESLSFELDQIVEFEPRKSNIIVNINSSENSIKHEWDVISCESFVLNLSKYNVS.

Its subcellular location is the plastid. The protein localises to the cyanelle. This is an uncharacterized protein from Cyanophora paradoxa.